The following is a 101-amino-acid chain: Small ribosomal subunit protein uS14 (101 aa).

It belongs to the universal ribosomal protein uS14 family. Part of the 30S ribosomal subunit. Contacts proteins S3 and S10.

Binds 16S rRNA, required for the assembly of 30S particles and may also be responsible for determining the conformation of the 16S rRNA at the A site. This Stutzerimonas stutzeri (strain A1501) (Pseudomonas stutzeri) protein is Small ribosomal subunit protein uS14.